A 465-amino-acid chain; its full sequence is Ribulose bisphosphate carboxylase large chain (465 aa).

K4 bears the N6,N6,N6-trimethyllysine mark. The substrate site is built by N113 and T163. K165 acts as the Proton acceptor in catalysis. K167 contributes to the substrate binding site. Mg(2+)-binding residues include K191, D193, and E194. K191 bears the N6-carboxylysine mark. The active-site Proton acceptor is H284. The substrate site is built by R285, H317, and S369.

It belongs to the RuBisCO large chain family. Type I subfamily. Heterohexadecamer of 8 large chains and 8 small chains; disulfide-linked. The disulfide link is formed within the large subunit homodimers. Mg(2+) serves as cofactor. The disulfide bond which can form in the large chain dimeric partners within the hexadecamer appears to be associated with oxidative stress and protein turnover.

It is found in the plastid. It localises to the chloroplast. It carries out the reaction 2 (2R)-3-phosphoglycerate + 2 H(+) = D-ribulose 1,5-bisphosphate + CO2 + H2O. The enzyme catalyses D-ribulose 1,5-bisphosphate + O2 = 2-phosphoglycolate + (2R)-3-phosphoglycerate + 2 H(+). Functionally, ruBisCO catalyzes two reactions: the carboxylation of D-ribulose 1,5-bisphosphate, the primary event in carbon dioxide fixation, as well as the oxidative fragmentation of the pentose substrate in the photorespiration process. Both reactions occur simultaneously and in competition at the same active site. The sequence is that of Ribulose bisphosphate carboxylase large chain from Manilkara zapota (Sapodilla plum).